The following is a 363-amino-acid chain: Ribosome-binding ATPase YchF (363 aa).

One can recognise an OBG-type G domain in the interval 3 to 257; the sequence is FKCGFVGLPN…VSAYDHLSLK (255 aa). Residue 12–17 participates in ATP binding; it reads NVGKST. Mg(2+) contacts are provided by Ser-16 and Thr-36. Positions 278-361 constitute a TGS domain; sequence NLITFFTAGK…CDGDIIHVLY (84 aa).

This sequence belongs to the TRAFAC class OBG-HflX-like GTPase superfamily. OBG GTPase family. YchF/OLA1 subfamily. It depends on Mg(2+) as a cofactor.

ATPase that binds to both the 70S ribosome and the 50S ribosomal subunit in a nucleotide-independent manner. The chain is Ribosome-binding ATPase YchF from Buchnera aphidicola subsp. Baizongia pistaciae (strain Bp).